Here is a 530-residue protein sequence, read N- to C-terminus: Bifunctional purine biosynthesis protein PurH (530 aa).

Residues 1–147 (MPSIKRALIS…KNWKHVAIVT (147 aa)) form the MGS-like domain.

It belongs to the PurH family.

It carries out the reaction (6R)-10-formyltetrahydrofolate + 5-amino-1-(5-phospho-beta-D-ribosyl)imidazole-4-carboxamide = 5-formamido-1-(5-phospho-D-ribosyl)imidazole-4-carboxamide + (6S)-5,6,7,8-tetrahydrofolate. It catalyses the reaction IMP + H2O = 5-formamido-1-(5-phospho-D-ribosyl)imidazole-4-carboxamide. It participates in purine metabolism; IMP biosynthesis via de novo pathway; 5-formamido-1-(5-phospho-D-ribosyl)imidazole-4-carboxamide from 5-amino-1-(5-phospho-D-ribosyl)imidazole-4-carboxamide (10-formyl THF route): step 1/1. The protein operates within purine metabolism; IMP biosynthesis via de novo pathway; IMP from 5-formamido-1-(5-phospho-D-ribosyl)imidazole-4-carboxamide: step 1/1. This Neisseria meningitidis serogroup A / serotype 4A (strain DSM 15465 / Z2491) protein is Bifunctional purine biosynthesis protein PurH.